An 86-amino-acid chain; its full sequence is Tryptophan-containing weak neurotoxin (86 aa).

The signal sequence occupies residues 1–21; it reads MKTLLLTLVVVTIVCLDLGYT. 5 disulfide bridges follow: Cys24–Cys45, Cys27–Cys32, Cys38–Cys63, Cys67–Cys78, and Cys79–Cys84.

The protein belongs to the three-finger toxin family. Ancestral subfamily. Orphan group II sub-subfamily. In terms of assembly, monomer in solution. Post-translationally, the disulfide bond Cys-27-Cys-32 is probably not needed for efficient interaction of the toxin with the target receptor (Torpedo muscle or alpha-7/CHRNA7 nAChR). In terms of tissue distribution, expressed by the venom gland.

It is found in the secreted. Neurotoxin that irreversibly inhibits nicotinic acetylcholine receptors (nAChR) and allosterically interacts with muscarinic acetylcholine receptors (mAChR). The loop II is involved in the interaction of this toxin with nAChR and mAChR. On nAChR, it acts as a competitive antagonist (muscle-type and alpha-7/CHRNA7) with IC(50) values in the micromolar range. On mAChR, in presence of ACh, it partially inhibits the effect of acetylcholine (ACh) (allosteric antagonist), whereas in the absence of ACh, it activates the receptor (allosteric agonist). It also shows a very weak inhibition of GABA(A) receptor composed of alpha-1-beta-3-gamma-2 (GABRA1 and GABRB3 and GABRG2) subunits (10 uM inhibit 31% current). In vivo, is nonlethal to mice at concentrations up to 20 mg/kg, but exerts a myorelaxant effect, induces a dose-dependent decrease in blood pressure and an increase in heart rate in mice and rats. In Naja kaouthia (Monocled cobra), this protein is Tryptophan-containing weak neurotoxin.